The chain runs to 408 residues: MVYQPACGARDILPLDVARQRWLEQRLERVFQSWGYQEIITPTIETLATLTAGGTVHPETVIQVQGSGDEPLGLRPELTASIARAAVTRMAGMQLPQRLYYKTNVFRRTTGAELGNQQEFFQAGVELLGATGLAADAEILWLVQECLGVLAVGEAYLLVGDAHLTQQLLGTFPAELQKTVRQCLANLDRVSLQALPAPWRDRALALFDLRGTPEEVGERLAQWSDVAGVVDRFAQLQQLLALVAESLAITLDLSLVQSFDYYTGIIFEVLIPTETELRLVAQGGRYDQLLSIYHPDGATVPGIGFVFNVEALLQAVAIPPAALLAPRSQWLVVPRTANALAAALHHAQTLRLDGSTRVELALLELTPEQIRAYARDRQIPYIAWIESDAPPQIEALSDGATSLQIQRV.

It belongs to the class-II aminoacyl-tRNA synthetase family. HisZ subfamily. Heteromultimer composed of HisG and HisZ subunits.

It localises to the cytoplasm. It participates in amino-acid biosynthesis; L-histidine biosynthesis; L-histidine from 5-phospho-alpha-D-ribose 1-diphosphate: step 1/9. In terms of biological role, required for the first step of histidine biosynthesis. May allow the feedback regulation of ATP phosphoribosyltransferase activity by histidine. This is ATP phosphoribosyltransferase regulatory subunit from Thermosynechococcus vestitus (strain NIES-2133 / IAM M-273 / BP-1).